The following is a 199-amino-acid chain: Thioredoxin peroxidase (199 aa).

Positions 6–165 (AKLNHPAPHF…TLRLVKAFQF (160 aa)) constitute a Thioredoxin domain. Cys52 acts as the Cysteine sulfenic acid (-SOH) intermediate in catalysis. A disordered region spans residues 179-199 (PGSKTMKADPNGSQDYFSSMN). Positions 189-199 (NGSQDYFSSMN) are enriched in polar residues.

Belongs to the peroxiredoxin family. AhpC/Prx1 subfamily. In terms of assembly, homodimer; disulfide-linked, upon oxidation.

The enzyme catalyses a hydroperoxide + [thioredoxin]-dithiol = an alcohol + [thioredoxin]-disulfide + H2O. In terms of biological role, thiol-specific peroxidase that catalyzes the reduction of hydrogen peroxide and organic hydroperoxides to water and alcohols, respectively. Plays a role in cell protection against oxidative stress by detoxifying peroxides and as sensor of hydrogen peroxide-mediated signaling events. The polypeptide is Thioredoxin peroxidase (Trypanosoma brucei rhodesiense).